A 622-amino-acid polypeptide reads, in one-letter code: 1-deoxy-D-xylulose-5-phosphate synthase (622 aa).

Thiamine diphosphate is bound by residues histidine 71 and 112-114 (GHS). Aspartate 143 provides a ligand contact to Mg(2+). Residues 144-145 (GA), asparagine 172, tyrosine 283, and glutamate 363 each bind thiamine diphosphate. Position 172 (asparagine 172) interacts with Mg(2+).

Belongs to the transketolase family. DXPS subfamily. Homodimer. Mg(2+) serves as cofactor. Thiamine diphosphate is required as a cofactor.

The enzyme catalyses D-glyceraldehyde 3-phosphate + pyruvate + H(+) = 1-deoxy-D-xylulose 5-phosphate + CO2. It functions in the pathway metabolic intermediate biosynthesis; 1-deoxy-D-xylulose 5-phosphate biosynthesis; 1-deoxy-D-xylulose 5-phosphate from D-glyceraldehyde 3-phosphate and pyruvate: step 1/1. Catalyzes the acyloin condensation reaction between C atoms 2 and 3 of pyruvate and glyceraldehyde 3-phosphate to yield 1-deoxy-D-xylulose-5-phosphate (DXP). The sequence is that of 1-deoxy-D-xylulose-5-phosphate synthase from Caldanaerobacter subterraneus subsp. tengcongensis (strain DSM 15242 / JCM 11007 / NBRC 100824 / MB4) (Thermoanaerobacter tengcongensis).